The following is a 70-amino-acid chain: Sporulation protein YhaL (70 aa).

A helical membrane pass occupies residues 3 to 23 (FFPWWVYLCIVGIIFSAYKLV). A disordered region spans residues 48 to 70 (MEKERERRSSQQHEEENQNHSIA).

It localises to the cell membrane. Functionally, required for efficient sporulation. The sequence is that of Sporulation protein YhaL (yhaL) from Bacillus subtilis (strain 168).